Reading from the N-terminus, the 233-residue chain is MAKLTKRMRVIREKVDVTKEYEINEAVALLQELATAKFVESVDVAVNLGIDARKSDQNVRGATVLPHGTGRDIRVAVFTQGANAEAAKEAGADIVGMEDLAEQVKKGEMNFDVVVASPDAMRVVGQLGTILGPRGLMPNPKVGTVTPNVAEAVKNAKAGQVRYRNDKNGIIHTTIGKANFSAEQIKENLEALLVALKKAKPSSAKGTFLKKVSISTTMGAGVAVDQASLNTQA.

Belongs to the universal ribosomal protein uL1 family. In terms of assembly, part of the 50S ribosomal subunit.

Functionally, binds directly to 23S rRNA. The L1 stalk is quite mobile in the ribosome, and is involved in E site tRNA release. Its function is as follows. Protein L1 is also a translational repressor protein, it controls the translation of the L11 operon by binding to its mRNA. The chain is Large ribosomal subunit protein uL1 from Vibrio parahaemolyticus serotype O3:K6 (strain RIMD 2210633).